The following is a 38-amino-acid chain: Small ribosomal subunit protein uS12c (38 aa).

Positions 1–26 (MPTIQQLIRNARQPIENRKKSPALRG) are disordered.

This sequence belongs to the universal ribosomal protein uS12 family. In terms of assembly, part of the 30S ribosomal subunit.

It is found in the plastid. Its subcellular location is the chloroplast. With S4 and S5 plays an important role in translational accuracy. Located at the interface of the 30S and 50S subunits. The protein is Small ribosomal subunit protein uS12c (rps12) of Pinus contorta (Shore pine).